Consider the following 382-residue polypeptide: Glycerate dehydrogenase (382 aa).

NAD(+)-binding positions include 175-176 (RI), 271-273 (CSR), and D297. R273 is a catalytic residue. The active site involves E302. H320 acts as the Proton donor in catalysis. 320–323 (HIAS) provides a ligand contact to NAD(+).

It belongs to the D-isomer specific 2-hydroxyacid dehydrogenase family.

The protein localises to the peroxisome. It carries out the reaction (R)-glycerate + NAD(+) = 3-hydroxypyruvate + NADH + H(+). It functions in the pathway photosynthesis; photorespiration; 3-phospho-D-glycerate from glycine: step 3/4. This is Glycerate dehydrogenase (HPR-A) from Cucumis sativus (Cucumber).